Consider the following 531-residue polypeptide: MDTLFRLVSLQQQQQSDSIITNQSSLSRTSTTTTGSPQTAYHYNFPQNDVVEECFNFFMDEEDLSSSSSHHNHHNHNNPNTYYSPFTTPTQYHPATSSTPSSTAAAAALASPYSSSGHHNDPSAFSIPQTPPSFDFSANAKWADSVLLEAARAFSDKDTARAQQILWTLNELSSPYGDTEQKLASYFLQALFNRMTGSGERCYRTMVTAAATEKTCSFESTRKTVLKFQEVSPWATFGHVAANGAILEAVDGEAKIHIVDISSTFCTQWPTLLEALATRSDDTPHLRLTTVVVANKFVNDQTASHRMMKEIGNRMEKFARLMGVPFKFNIIHHVGDLSEFDLNELDVKPDEVLAINCVGAMHGIASRGSPRDAVISSFRRLRPRIVTVVEEEADLVGEEEGGFDDEFLRGFGECLRWFRVCFESWEESFPRTSNERLMLERAAGRAIVDLVACEPSDSTERRETARKWSRRMRNSGFGAVGYSDEVADDVRALLRRYKEGVWSMVQCPDAAGIFLCWRDQPVVWASAWRPT.

Residues 14–39 (QQSDSIITNQSSLSRTSTTTTGSPQT) are compositionally biased toward low complexity. 2 disordered regions span residues 14–40 (QQSD…PQTA) and 65–103 (SSSS…PSST). Polar residues predominate over residues 81–93 (TYYSPFTTPTQYH). A compositionally biased stretch (low complexity) spans 94–103 (PATSSTPSST). The 396-residue stretch at 134 to 529 (FDFSANAKWA…QPVVWASAWR (396 aa)) folds into the GRAS domain. The interval 141-206 (KWADSVLLEA…GSGERCYRTM (66 aa)) is leucine repeat I (LRI). Positions 225–290 (VLKFQEVSPW…DDTPHLRLTT (66 aa)) are VHIID. Positions 256–260 (IHIVD) match the VHIID motif. Positions 310–343 (EIGNRMEKFARLMGVPFKFNIIHHVGDLSEFDLN) are leucine repeat II (LRII). A PFYRE region spans residues 353 to 449 (LAINCVGAMH…ERAAGRAIVD (97 aa)). The segment at 452–529 (ACEPSDSTER…QPVVWASAWR (78 aa)) is SAW.

This sequence belongs to the GRAS family. Interacts with SCR, SCL23, JKD and MGP. Interacts with SIEL. Association to endosomes and intercellular movement of SHR rely on the interaction with SIEL. In terms of tissue distribution, expressed in the stele and the quiescent center. Not detected in the ground tissue cell lineage. The SHR protein moves from the stele to a single layer of adjacent cells, where it enters the nucleus.

The protein resides in the cytoplasm. Its subcellular location is the nucleus. The protein localises to the early endosome. It is found in the late endosome. It localises to the recycling endosome. Functionally, transcription factor required for quiescent center cells specification and maintenance of surrounding stem cells, and for the asymmetric cell division involved in radial pattern formation in roots. Essential for both cell division and cell specification. Regulates the radial organization of the shoot axial organs and is required for normal shoot gravitropism. Directly controls the transcription of SCR, and when associated with SCR, of MGP, RLK, TRI, NUC and SCL3. This is Protein SHORT-ROOT from Arabidopsis thaliana (Mouse-ear cress).